The primary structure comprises 61 residues: Small ribosomal subunit protein uS14 (61 aa).

Residues Cys24, Cys27, Cys40, and Cys43 each coordinate Zn(2+).

The protein belongs to the universal ribosomal protein uS14 family. Zinc-binding uS14 subfamily. In terms of assembly, part of the 30S ribosomal subunit. Contacts proteins S3 and S10. The cofactor is Zn(2+).

In terms of biological role, binds 16S rRNA, required for the assembly of 30S particles and may also be responsible for determining the conformation of the 16S rRNA at the A site. This Streptococcus thermophilus (strain ATCC BAA-491 / LMD-9) protein is Small ribosomal subunit protein uS14.